The sequence spans 125 residues: Small ribosomal subunit protein uS13 (125 aa).

The segment at 95–125 (GLPVRGQRTKNNCRTRKGKRKTVANKKKATK) is disordered.

It belongs to the universal ribosomal protein uS13 family. Part of the 30S ribosomal subunit. Forms a loose heterodimer with protein S19. Forms two bridges to the 50S subunit in the 70S ribosome.

Functionally, located at the top of the head of the 30S subunit, it contacts several helices of the 16S rRNA. In the 70S ribosome it contacts the 23S rRNA (bridge B1a) and protein L5 of the 50S subunit (bridge B1b), connecting the 2 subunits; these bridges are implicated in subunit movement. Contacts the tRNAs in the A and P-sites. This is Small ribosomal subunit protein uS13 from Cytophaga hutchinsonii (strain ATCC 33406 / DSM 1761 / CIP 103989 / NBRC 15051 / NCIMB 9469 / D465).